Reading from the N-terminus, the 119-residue chain is Ribonuclease P protein component (119 aa).

Belongs to the RnpA family. In terms of assembly, consists of a catalytic RNA component (M1 or rnpB) and a protein subunit.

The catalysed reaction is Endonucleolytic cleavage of RNA, removing 5'-extranucleotides from tRNA precursor.. In terms of biological role, RNaseP catalyzes the removal of the 5'-leader sequence from pre-tRNA to produce the mature 5'-terminus. It can also cleave other RNA substrates such as 4.5S RNA. The protein component plays an auxiliary but essential role in vivo by binding to the 5'-leader sequence and broadening the substrate specificity of the ribozyme. The protein is Ribonuclease P protein component of Salmonella paratyphi A (strain AKU_12601).